The chain runs to 638 residues: MDRLKCPNFFKCRQKEKVTASSENFHVGENDENQERGNWSKKSDYLLSMVGYAVGLGNVWRFPYLTYTNGGGAFLIPYAIMLALAGLPLFFLECSLGQFASLGPVSVWRILPLFQGVGITMVLISVFVAIYYNVIIAYSLYYLFASFQSVLPWANCSSWADENCSRTPIVTGCNVSIGAGEMFMNISWVNTNNLTCLNGSEVFRPGQLPSEQYWDKVTLQRSSGMDETGVVVWYLALCLLLAWLIVGAALFKGIKSSGKVVYFTALFPYVVLLILLIRGATLEGASKGISYYIGAQSNFTKLREAEVWKDAATQIFYSLSVAWGGLVALSSYNKFNNNCYSDAIIVCLTNCLTSVFAGFAIFSILGHMAHISGKEVSQVVKSGFDLAFIAYPEALAQLPAGPFWSILFFFMLLTLGLDSQFASIETITTTFQDLFPKAMKRMRVPITLGCCLILFLLGLLCVTQAGIYWVHLIDHFCAGWGILIAAILEIAGIIWIYGGNRFIEDIEMMIGAKRWIFWLWWRACWFVITPILLSAILVWSLVKFHRPDYADIPYPDWGVALGWCMIIFCIIWIPIMAIIKIVQAEGNILQRIISCCRPASNWGPYLEKHRGERYRDMAEPAKETDHEIPTISGSTKPE.

The Cytoplasmic segment spans residues 1-44 (MDRLKCPNFFKCRQKEKVTASSENFHVGENDENQERGNWSKKSD). Transmembrane regions (helical) follow at residues 45–65 (YLLS…FPYL), 72–92 (GAFL…LFFL), and 110–130 (ILPL…FVAI). The Extracellular portion of the chain corresponds to 131–230 (YYNVIIAYSL…RSSGMDETGV (100 aa)). N-linked (GlcNAc...) asparagine glycosylation is found at N155, N163, N174, N185, N193, and N198. 2 consecutive transmembrane segments (helical) span residues 231 to 251 (VVWY…AALF) and 257 to 277 (SGKV…ILLI). An N-linked (GlcNAc...) asparagine glycan is attached at N298. The next 7 membrane-spanning stretches (helical) occupy residues 311–331 (AATQ…ALSS), 344–364 (IIVC…IFSI), 395–415 (LAQL…LLTL), 453–473 (ILFL…VHLI), 476–496 (FCAG…IIWI), 524–544 (CWFV…LVKF), and 559–579 (VALG…MAII). Residues 580–638 (KIVQAEGNILQRIISCCRPASNWGPYLEKHRGERYRDMAEPAKETDHEIPTISGSTKPE) lie on the Cytoplasmic side of the membrane. Positions 618–628 (AEPAKETDHEI) are enriched in basic and acidic residues. The disordered stretch occupies residues 618-638 (AEPAKETDHEIPTISGSTKPE).

This sequence belongs to the sodium:neurotransmitter symporter (SNF) (TC 2.A.22) family. SLC6A14 subfamily. In terms of tissue distribution, expressed in the distal region of the intestinal tract: cecum and colon.

The protein resides in the membrane. It is found in the apical cell membrane. It carries out the reaction glycine(out) + chloride(out) + 2 Na(+)(out) = glycine(in) + chloride(in) + 2 Na(+)(in). It catalyses the reaction L-leucine(out) + chloride(out) + 2 Na(+)(out) = L-leucine(in) + chloride(in) + 2 Na(+)(in). The catalysed reaction is L-glutamine(out) + chloride(out) + 2 Na(+)(out) = L-glutamine(in) + chloride(in) + 2 Na(+)(in). The enzyme catalyses L-arginine(out) + chloride(out) + 2 Na(+)(out) = L-arginine(in) + chloride(in) + 2 Na(+)(in). It carries out the reaction (R)-carnitine(out) + chloride(out) + 2 Na(+)(out) = (R)-carnitine(in) + chloride(in) + 2 Na(+)(in). It catalyses the reaction O-propanoyl-(R)-carnitine(out) + chloride(out) + 2 Na(+)(out) = O-propanoyl-(R)-carnitine(in) + chloride(in) + 2 Na(+)(in). The catalysed reaction is L-isoleucine(out) + chloride(out) + 2 Na(+)(out) = L-isoleucine(in) + chloride(in) + 2 Na(+)(in). The enzyme catalyses L-methionine(out) + chloride(out) + 2 Na(+)(out) = L-methionine(in) + chloride(in) + 2 Na(+)(in). It carries out the reaction L-valine(out) + chloride(out) + 2 Na(+)(out) = L-valine(in) + chloride(in) + 2 Na(+)(in). It catalyses the reaction L-alanine(out) + chloride(out) + 2 Na(+)(out) = L-alanine(in) + chloride(in) + 2 Na(+)(in). The catalysed reaction is L-serine(out) + chloride(out) + 2 Na(+)(out) = L-serine(in) + chloride(in) + 2 Na(+)(in). The enzyme catalyses L-cysteine(out) + chloride(out) + 2 Na(+)(out) = L-cysteine(in) + chloride(in) + 2 Na(+)(in). It carries out the reaction L-asparagine(out) + chloride(out) + 2 Na(+)(out) = L-asparagine(in) + chloride(in) + 2 Na(+)(in). It catalyses the reaction L-threonine(out) + chloride(out) + 2 Na(+)(out) = L-threonine(in) + chloride(in) + 2 Na(+)(in). The catalysed reaction is L-phenylalanine(out) + chloride(out) + 2 Na(+)(out) = L-phenylalanine(in) + chloride(in) + 2 Na(+)(in). The enzyme catalyses L-tryptophan(out) + chloride(out) + 2 Na(+)(out) = L-tryptophan(in) + chloride(in) + 2 Na(+)(in). It carries out the reaction L-tyrosine(out) + chloride(out) + 2 Na(+)(out) = L-tyrosine(in) + chloride(in) + 2 Na(+)(in). It catalyses the reaction L-histidine(out) + chloride(out) + 2 Na(+)(out) = L-histidine(in) + chloride(in) + 2 Na(+)(in). The catalysed reaction is L-lysine(out) + chloride(out) + 2 Na(+)(out) = L-lysine(in) + chloride(in) + 2 Na(+)(in). The enzyme catalyses O-butanoyl-(R)-carnitine(out) + chloride(out) + 2 Na(+)(out) = O-butanoyl-(R)-carnitine(in) + chloride(in) + 2 Na(+)(in). Its function is as follows. Amino acid transporter that plays an important role in the absorption of amino acids in the intestinal tract. Mediates the uptake of a broad range of neutral and cationic amino acids (with the exception of proline) in a Na(+)/Cl(-)-dependent manner. Transports non-alpha-amino acids such as beta-alanine with low affinity, and has a higher affinity for dipolar and cationic amino acids such as leucine and lysine. Can also transport carnitine, butyrylcarnitine and propionylcarnitine coupled to the transmembrane gradients of Na(+) and Cl(-). The polypeptide is Sodium- and chloride-dependent neutral and basic amino acid transporter B(0+) (Mus musculus (Mouse)).